The primary structure comprises 438 residues: Gamma-glutamyl phosphate reductase (438 aa).

This sequence belongs to the gamma-glutamyl phosphate reductase family.

The protein localises to the cytoplasm. The enzyme catalyses L-glutamate 5-semialdehyde + phosphate + NADP(+) = L-glutamyl 5-phosphate + NADPH + H(+). The protein operates within amino-acid biosynthesis; L-proline biosynthesis; L-glutamate 5-semialdehyde from L-glutamate: step 2/2. Catalyzes the NADPH-dependent reduction of L-glutamate 5-phosphate into L-glutamate 5-semialdehyde and phosphate. The product spontaneously undergoes cyclization to form 1-pyrroline-5-carboxylate. The polypeptide is Gamma-glutamyl phosphate reductase (Prochlorococcus marinus (strain NATL1A)).